The chain runs to 1177 residues: Dynein axonemal assembly factor 9 (1177 aa).

Positions 1–27 (MDVYPPRRQGLPRARSPGGSSRGSPSV) are disordered. Residues 11 to 27 (LPRARSPGGSSRGSPSV) are compositionally biased toward low complexity.

In terms of assembly, interacts with ARL3.

In terms of biological role, may act as an effector for ARL3. The sequence is that of Dynein axonemal assembly factor 9 from Homo sapiens (Human).